The sequence spans 299 residues: Nitrogenase iron protein (299 aa).

11–18 (GKGGIGKS) contributes to the ATP binding site. Cys-99 is a binding site for [4Fe-4S] cluster. Arg-102 bears the ADP-ribosylarginine; by dinitrogenase reductase ADP-ribosyltransferase mark. Position 133 (Cys-133) interacts with [4Fe-4S] cluster.

This sequence belongs to the NifH/BchL/ChlL family. As to quaternary structure, homodimer. Requires [4Fe-4S] cluster as cofactor. The reversible ADP-ribosylation of Arg-102 inactivates the nitrogenase reductase and regulates nitrogenase activity.

The catalysed reaction is N2 + 8 reduced [2Fe-2S]-[ferredoxin] + 16 ATP + 16 H2O = H2 + 8 oxidized [2Fe-2S]-[ferredoxin] + 2 NH4(+) + 16 ADP + 16 phosphate + 6 H(+). The key enzymatic reactions in nitrogen fixation are catalyzed by the nitrogenase complex, which has 2 components: the iron protein and the molybdenum-iron protein. The sequence is that of Nitrogenase iron protein from Methylobacterium nodulans (strain LMG 21967 / CNCM I-2342 / ORS 2060).